We begin with the raw amino-acid sequence, 612 residues long: Phosphopentomutase (612 aa).

An N-acetylalanine modification is found at A2. 2 residues coordinate alpha-D-glucose 1,6-bisphosphate: R63 and S165. S165 acts as the Phosphoserine intermediate in catalysis. Residues S165, D322, D324, and D326 each contribute to the Mg(2+) site. Position 165 is a phosphoserine (S165). Residues D326, R327, T400, E424, and K438 each coordinate alpha-D-glucose 1,6-bisphosphate.

This sequence belongs to the phosphohexose mutase family. In terms of assembly, monomer. Requires Mg(2+) as cofactor.

It localises to the cytoplasm. It is found in the cytosol. It carries out the reaction alpha-D-ribose 1-phosphate = D-ribose 5-phosphate. The enzyme catalyses 2-deoxy-alpha-D-ribose 1-phosphate = 2-deoxy-D-ribose 5-phosphate. The catalysed reaction is alpha-D-glucose 1-phosphate = alpha-D-glucose 6-phosphate. It catalyses the reaction O-phospho-L-seryl-[protein] + alpha-D-glucose 1-phosphate = alpha-D-glucose 1,6-bisphosphate + L-seryl-[protein]. It carries out the reaction alpha-D-glucose 1,6-bisphosphate + L-seryl-[protein] = O-phospho-L-seryl-[protein] + alpha-D-glucose 6-phosphate. Functionally, catalyzes the conversion of the nucleoside breakdown products ribose-1-phosphate and deoxyribose-1-phosphate to the corresponding 5-phosphopentoses. Catalyzes the reversible isomerization of alpha-D-glucose 1-phosphate to alpha-D-glucose 6-phosphate but with a lower catalytic efficiency. The mechanism proceeds via the intermediate compound alpha-D-glucose 1,6-bisphosphate. In vitro, also has a low glucose 1,6-bisphosphate synthase activity which is most probably not physiologically relevant. The sequence is that of Phosphopentomutase (PGM2) from Pongo abelii (Sumatran orangutan).